Here is a 512-residue protein sequence, read N- to C-terminus: Multidrug resistance protein 3 (512 aa).

14 consecutive transmembrane segments (helical) span residues 13–33 (FVVL…TIVA), 48–68 (KFAW…PIYG), 79–99 (FFLF…IAQT), 109–129 (IQGI…FDLF), 139–159 (GMFG…GAII), 163–183 (ISWH…LFFI), 200–220 (WGGA…LELG), 228–248 (SIQI…FFIV), 272–292 (ILAF…PIFV), 304–324 (GFIL…GGIF), 333–353 (LMLI…NMTP), 358–378 (VWLT…FSLL), 399–421 (SFLR…TNVF), and 475–495 (ITYV…TILF).

It belongs to the major facilitator superfamily. EmrB family.

It is found in the cell membrane. Its function is as follows. Confers resistance to puromycin, tosufloxacin and norfloxacin. The sequence is that of Multidrug resistance protein 3 (bmr3) from Bacillus subtilis (strain 168).